A 566-amino-acid chain; its full sequence is Good for full DBP5 activity protein 2 (566 aa).

Positions 1 to 16 (MQVQKMVRDNSNNGSD) are enriched in polar residues. Residues 1-41 (MQVQKMVRDNSNNGSDKSVHWERRNNNGAGPRYRSRSGNTG) are disordered.

In terms of biological role, high-copy suppressor of DBP5 mutation. The chain is Good for full DBP5 activity protein 2 (GFD2) from Saccharomyces cerevisiae (strain ATCC 204508 / S288c) (Baker's yeast).